Reading from the N-terminus, the 1710-residue chain is Protein NETWORKED 1B (1710 aa).

The region spanning Tyr13–Leu92 is the NAB domain. Positions Glu113–Ser159 are disordered. Composition is skewed to basic and acidic residues over residues Pro122–Lys137 and Gly150–Ser159. Coiled-coil stretches lie at residues Ser152–Ala446, Gln474–Cys546, Val579–Leu883, His974–Leu1021, Val1095–Lys1259, and Leu1285–Tyr1336. The tract at residues Arg1409–Pro1448 is disordered. The stretch at Arg1559–Ser1665 forms a coiled coil.

It belongs to the NET family. As to expression, expressed in root meristems and at very low levels throughout mature vasculature.

Its function is as follows. Plant-specific actin binding protein. May be part of a membrane-cytoskeletal adapter complex. This Arabidopsis thaliana (Mouse-ear cress) protein is Protein NETWORKED 1B.